A 187-amino-acid polypeptide reads, in one-letter code: Elongation factor P (187 aa).

This sequence belongs to the elongation factor P family.

It is found in the cytoplasm. Its pathway is protein biosynthesis; polypeptide chain elongation. Its function is as follows. Involved in peptide bond synthesis. Stimulates efficient translation and peptide-bond synthesis on native or reconstituted 70S ribosomes in vitro. Probably functions indirectly by altering the affinity of the ribosome for aminoacyl-tRNA, thus increasing their reactivity as acceptors for peptidyl transferase. The protein is Elongation factor P of Mycolicibacterium vanbaalenii (strain DSM 7251 / JCM 13017 / BCRC 16820 / KCTC 9966 / NRRL B-24157 / PYR-1) (Mycobacterium vanbaalenii).